The primary structure comprises 512 residues: Dihydroniloticin synthase CYP71CD1 (512 aa).

The chain crosses the membrane as a helical span at residues 7-27; it reads YFTVTSLLVFLTFLLRLVWGW. Cysteine 451 lines the heme pocket.

The protein belongs to the cytochrome P450 family. It depends on heme as a cofactor. Accumulates in mature fruits and in juice vesicles.

The protein resides in the membrane. It catalyses the reaction tirucalla-7,24-dien-3beta-ol + 2 reduced [NADPH--hemoprotein reductase] + 2 O2 = dihydroniloticin + 2 oxidized [NADPH--hemoprotein reductase] + 2 H2O + 2 H(+). It functions in the pathway secondary metabolite biosynthesis; terpenoid biosynthesis. Monooxygenase involved in the biosynthesis of limonoids triterpene natural products such as limonin, a compound with insecticidal activity responsible for the bitter taste in citrus. Catalyzes the conversion of tirucalladienol to dihydroniloticin. The polypeptide is Dihydroniloticin synthase CYP71CD1 (Citrus sinensis (Sweet orange)).